Reading from the N-terminus, the 77-residue chain is Pi-stichotoxin-Hmg5a (77 aa).

The signal sequence occupies residues 1–21 (MDYQRLLFLFAVAMVITTTVA). A propeptide spanning residues 22–34 (LPQDTALMDGQLQ) is cleaved from the precursor. 3 disulfide bridges follow: Cys40-Cys73, Cys42-Cys66, and Cys56-Cys74.

The protein belongs to the sea anemone type 3 (BDS) potassium channel toxin family.

The protein localises to the secreted. The protein resides in the nematocyst. Functionally, toxin that inhibits rat ASIC3 channels (IC(50)=13.8 uM). Also able to bind T.californica muscle-type nicotinic acetylcholine receptors (nAChR), and human alpha-7/CHRNA7 nicotinic acetylcholine receptors. The polypeptide is Pi-stichotoxin-Hmg5a (Heteractis magnifica (Magnificent sea anemone)).